The primary structure comprises 532 residues: MAKRVAIVGAGVSGLASIKCCLEEGLEPTCFERSDDLGGLWRFTEHVEEGRASLYKSVVSNSCKEMSCYSDFPFPEDYPNYVPNSQFLEYLKMYANRFSLLKCIRFKTKVCKVTKCPDFTVTGQWEVVTQHEGKQESAIFDAVMVCTGFLTNPHLPLDCFPGINTFKGQYFHSRQYKHPDIFKDKRVLVIGMGNSGTDIAVETSRLAKKVFLSTTGGAWVMSRVFDSGYPWDMVFMTRFQNMFRNSLPTPIVTWLMARKMNSWFNHANYGLVPEDRTQLREPVLNDELPGCIITGKVLIKPSIKEVKENSVVFNNTPKEEPIDIIVFATGYTFAFPFLDETVVKVENGQASLYKYIFPVHLPKPTLAVIGLIKPLGSMIPTGETQARWAVRVLKGINKLPPQSAMTEEVNARKENKPSGFGLCYCKALQSDYITYIDELLTNINAKPNLFSLLLTDPRLALTIFFGPCTPYQFRLTGPGKWKGARNAILTQWDRTFKVTKTRIVQESPTPFASLLKLLSLLALLMAIFLIFL.

At A2 the chain carries N-acetylalanine. Residues A2–P510 are Lumenal-facing. FAD is bound by residues G9–S13, E32, L40–W41, and N61–S62. Residues S60 to N61 and S195 to D198 contribute to the NADP(+) site. Residues F511 to F531 form a helical membrane-spanning segment. L532 is a topological domain (cytoplasmic).

The protein belongs to the FMO family. The cofactor is FAD. As to expression, liver.

The protein resides in the endoplasmic reticulum membrane. The enzyme catalyses hypotaurine + NADPH + O2 + H(+) = taurine + NADP(+) + H2O. It catalyses the reaction hypotaurine + NADH + O2 + H(+) = taurine + NAD(+) + H2O. The catalysed reaction is trimethylamine + NADPH + O2 = trimethylamine N-oxide + NADP(+) + H2O. It carries out the reaction N,N-dimethylaniline + NADPH + O2 + H(+) = N,N-dimethylaniline N-oxide + NADP(+) + H2O. Its function is as follows. Broad spectrum monooxygenase that catalyzes the oxygenation of a wide variety of nitrogen- and sulfur-containing compounds including xenobiotics. Catalyzes the S-oxygenation of hypotaurine to produce taurine, an organic osmolyte involved in cell volume regulation as well as a variety of cytoprotective and developmental processes. In vitro, catalyzes the N-oxygenation of trimethylamine (TMA) to produce trimethylamine N-oxide (TMAO) and could therefore participate to the detoxification of this compound that is generated by the action of gut microbiota from dietary precursors such as choline, choline containing compounds, betaine or L-carnitine. This Canis lupus familiaris (Dog) protein is Flavin-containing monooxygenase 1 (FMO1).